Consider the following 452-residue polypeptide: MAGYLRAVSSLCRASGSTRTWAPAALNVPSWPEQPRRHYAEKRIKVEKPVVEMDGDEMTRIIWQFIKEKLILPHVDVQLKYFDLGLPNRDQTNDQVTIDSALATQKYSVAVKCATITPDEARVEEFKLKKMWKSPNGTIRNILGGTVFREPIICKNIPRLVPGWTKPITIGRHAHGDQYKATDFVVDRAGMFKLVFTPKDGSGAKEWEVYNFPAGGVGMGMYNTDESISGFAHSCFQYSIQKKWPLYLSTKNTIMKAYDGRFKDIFQEIFDKHYKTDFDKNKIWYEHRLIDDMVAQVLKSSGGFVWACKNYDGDVQSDILAQGFGSLGLMTSVLVCPDGKTIEAEAAHGTVTRHYREHQKGRPTSTNPIASIFAWTRGLEHRGKLDGNQDLIRFAQTLEKVCVQTVESGAMTKDLAGCIHGLSNVKLNEHFLNTTDFLDTIKSNLDRALGKQ.

Residues 1–39 constitute a mitochondrion transit peptide; sequence MAGYLRAVSSLCRASGSTRTWAPAALNVPSWPEQPRRHY. An N6-acetyllysine mark is found at Lys45, Lys48, Lys67, and Lys69. An N6-acetyllysine; alternate mark is found at Lys80 and Lys106. An N6-succinyllysine; alternate mark is found at Lys80 and Lys106. Residues 115–117 and Arg122 each bind NADP(+); that span reads TIT. Residue Thr117 participates in D-threo-isocitrate binding. Residues 134-140 and Arg149 contribute to the D-threo-isocitrate site; that span reads SPNGTIR. The residue at position 155 (Lys155) is an N6-acetyllysine. Lys166 is modified (N6-acetyllysine; alternate). N6-succinyllysine; alternate is present on Lys166. Position 172 (Arg172) interacts with D-threo-isocitrate. Lys180 and Lys193 each carry N6-acetyllysine; alternate. N6-succinyllysine; alternate is present on residues Lys180 and Lys193. Residue Lys199 is modified to N6-acetyllysine. Lys256 carries the N6-acetyllysine; alternate modification. The residue at position 256 (Lys256) is an N6-succinyllysine; alternate. N6-acetyllysine occurs at positions 263, 272, 275, and 280. The residue at position 282 (Lys282) is an N6-acetyllysine; alternate. Lys282 is subject to N6-succinyllysine; alternate. Asp291 contacts Mn(2+). Residue Lys299 coordinates NADP(+). Mn(2+) is bound at residue Asp314. Residues 349–354 and Asn367 contribute to the NADP(+) site; that span reads GTVTRH. The residue at position 384 (Lys384) is an N6-acetyllysine; alternate. Residue Lys384 is modified to N6-succinyllysine; alternate. Lys400, Lys413, and Lys442 each carry N6-acetyllysine.

This sequence belongs to the isocitrate and isopropylmalate dehydrogenases family. As to quaternary structure, homodimer. The cofactor is Mg(2+). Mn(2+) serves as cofactor. In terms of processing, acetylation at Lys-413 dramatically reduces catalytic activity. Deacetylated by SIRT3.

Its subcellular location is the mitochondrion. It catalyses the reaction D-threo-isocitrate + NADP(+) = 2-oxoglutarate + CO2 + NADPH. Its function is as follows. Plays a role in intermediary metabolism and energy production. It may tightly associate or interact with the pyruvate dehydrogenase complex. This is Isocitrate dehydrogenase [NADP], mitochondrial (Idh2) from Rattus norvegicus (Rat).